Here is a 122-residue protein sequence, read N- to C-terminus: Large ribosomal subunit protein uL14 (122 aa).

The protein belongs to the universal ribosomal protein uL14 family. As to quaternary structure, part of the 50S ribosomal subunit. Forms a cluster with proteins L3 and L19. In the 70S ribosome, L14 and L19 interact and together make contacts with the 16S rRNA in bridges B5 and B8.

In terms of biological role, binds to 23S rRNA. Forms part of two intersubunit bridges in the 70S ribosome. This Mycobacteroides abscessus (strain ATCC 19977 / DSM 44196 / CCUG 20993 / CIP 104536 / JCM 13569 / NCTC 13031 / TMC 1543 / L948) (Mycobacterium abscessus) protein is Large ribosomal subunit protein uL14.